A 120-amino-acid polypeptide reads, in one-letter code: Aspartate 1-decarboxylase (120 aa).

Ser-25 serves as the catalytic Schiff-base intermediate with substrate; via pyruvic acid. Ser-25 carries the pyruvic acid (Ser) modification. Thr-57 contributes to the substrate binding site. Tyr-58 serves as the catalytic Proton donor. Residue 73-75 (GAA) participates in substrate binding.

It belongs to the PanD family. In terms of assembly, heterooctamer of four alpha and four beta subunits. Requires pyruvate as cofactor. Is synthesized initially as an inactive proenzyme, which is activated by self-cleavage at a specific serine bond to produce a beta-subunit with a hydroxyl group at its C-terminus and an alpha-subunit with a pyruvoyl group at its N-terminus.

The protein localises to the cytoplasm. It carries out the reaction L-aspartate + H(+) = beta-alanine + CO2. It functions in the pathway cofactor biosynthesis; (R)-pantothenate biosynthesis; beta-alanine from L-aspartate: step 1/1. Functionally, catalyzes the pyruvoyl-dependent decarboxylation of aspartate to produce beta-alanine. The protein is Aspartate 1-decarboxylase of Cupriavidus taiwanensis (strain DSM 17343 / BCRC 17206 / CCUG 44338 / CIP 107171 / LMG 19424 / R1) (Ralstonia taiwanensis (strain LMG 19424)).